The sequence spans 644 residues: Phosphatidylinositol polyphosphate 5-phosphatase type IV (644 aa).

The disordered stretch occupies residues 1–193; that stretch reads MPSKAENLRP…RLPSLLPPRP (193 aa). 8 tandem repeats follow at residues 10–13, 15–18, 28–31, 39–42, 55–58, 69–71, 72–74, and 75–78. Positions 10 to 242 are 13 X 4 AA repeats of P-X-X-P; the sequence is PSEPAPQPPE…SLGPGRPRSP (233 aa). The span at 78-90 shows a compositional bias: basic and acidic residues; that stretch reads PRLERALSLDDKG. A Phosphoserine modification is found at serine 99. Polar residues predominate over residues 107–118; the sequence is NGTSPSRGSVQS. Repeat unit 9 spans residues 121-124; it reads PGAP. The span at 152–163 shows a compositional bias: low complexity; it reads GSPSSGGNPLSG. Repeat copies occupy residues 169–172, 183–185, 190–193, and 236–239. Phosphoserine is present on residues serine 241 and serine 256. Cysteine 641 is modified (cysteine methyl ester). Cysteine 641 carries the S-farnesyl cysteine lipid modification. Residues 642-644 constitute a propeptide, removed in mature form; that stretch reads SVS.

The protein belongs to the inositol polyphosphate 5-phosphatase family. In terms of assembly, interacts (when prenylated) with PDE6D; this is important for normal location in cilia.

It is found in the cytoplasm. The protein localises to the cytoskeleton. It localises to the cilium axoneme. Its subcellular location is the golgi apparatus. The protein resides in the golgi stack membrane. It is found in the cell membrane. The protein localises to the cell projection. It localises to the ruffle. Its subcellular location is the nucleus. The catalysed reaction is a 1,2-diacyl-sn-glycero-3-phospho-(1D-myo-inositol-4,5-bisphosphate) + H2O = a 1,2-diacyl-sn-glycero-3-phospho-(1D-myo-inositol 4-phosphate) + phosphate. The enzyme catalyses a 1,2-diacyl-sn-glycero-3-phospho-(1D-myo-inositol-3,4,5-trisphosphate) + H2O = a 1,2-diacyl-sn-glycero-3-phospho-(1D-myo-inositol-3,4-bisphosphate) + phosphate. It carries out the reaction a 1,2-diacyl-sn-glycero-3-phospho-(1D-myo-inositol-3,5-bisphosphate) + H2O = a 1,2-diacyl-sn-glycero-3-phospho-(1D-myo-inositol-3-phosphate) + phosphate. In terms of biological role, phosphatidylinositol (PtdIns) phosphatase that specifically hydrolyzes the 5-phosphate of phosphatidylinositol-3,4,5-trisphosphate (PtdIns(3,4,5)P3), phosphatidylinositol 4,5-bisphosphate(PtdIns(4,5)P2) and phosphatidylinositol 3,5-bisphosphate (PtdIns(3,5)P2). Specific for lipid substrates, inactive towards water soluble inositol phosphates. Plays an essential role in the primary cilium by controlling ciliary growth and phosphoinositide 3-kinase (PI3K) signaling and stability. This is Phosphatidylinositol polyphosphate 5-phosphatase type IV (INPP5E) from Pan troglodytes (Chimpanzee).